A 215-amino-acid polypeptide reads, in one-letter code: Protein GET1 (215 aa).

At 1 to 4 the chain is on the lumenal side; sequence MINL. A helical membrane pass occupies residues 5–24; sequence ALVIFLCTLLNQIVSWVGKS. Topologically, residues 25-108 are cytoplasmic; that stretch reads VLQEIAFTAY…SFSKKFSTLL (84 aa). Residues 73-94 are a coiled coil; the sequence is AKLRRKLDKGLADLEKTNNTLS. A helical transmembrane segment spans residues 109–129; sequence WLMTTGAQFLLSWWFRKQPIF. Topologically, residues 130–153 are lumenal; the sequence is WLPEGWVPYPVAWLLSFPSAPIGS. Residues 154 to 170 traverse the membrane as a helical segment; that stretch reads VSSGAWGAICRRVLSTL. Residues 171-215 are Cytoplasmic-facing; that stretch reads QEIIQSVLAPSPAATGPVPTGPSSAKNDQPEAKIEALALEHEKLD. Residues 181–202 are disordered; sequence SPAATGPVPTGPSSAKNDQPEA.

The protein belongs to the WRB/GET1 family. As to quaternary structure, interacts with GET3.

The protein localises to the endoplasmic reticulum membrane. Its function is as follows. Required for the post-translational delivery of tail-anchored (TA) proteins to the endoplasmic reticulum. Acts as a membrane receptor for soluble GET3, which recognizes and selectively binds the transmembrane domain of TA proteins in the cytosol. In Cryptococcus neoformans var. neoformans serotype D (strain B-3501A) (Filobasidiella neoformans), this protein is Protein GET1.